The primary structure comprises 445 residues: N-succinylarginine dihydrolase (445 aa).

Substrate is bound by residues 19-28 (AGLSFGNVAS), asparagine 110, and 137-138 (HR). Glutamate 174 is an active-site residue. A substrate-binding site is contributed by arginine 214. Histidine 250 is a catalytic residue. Substrate-binding residues include aspartate 252 and asparagine 363. Catalysis depends on cysteine 369, which acts as the Nucleophile.

It belongs to the succinylarginine dihydrolase family. In terms of assembly, homodimer.

The catalysed reaction is N(2)-succinyl-L-arginine + 2 H2O + 2 H(+) = N(2)-succinyl-L-ornithine + 2 NH4(+) + CO2. The protein operates within amino-acid degradation; L-arginine degradation via AST pathway; L-glutamate and succinate from L-arginine: step 2/5. Catalyzes the hydrolysis of N(2)-succinylarginine into N(2)-succinylornithine, ammonia and CO(2). The polypeptide is N-succinylarginine dihydrolase (Shewanella pealeana (strain ATCC 700345 / ANG-SQ1)).